Consider the following 207-residue polypeptide: Superoxide dismutase [Mn] (207 aa).

Mn(2+) is bound by residues H28, H76, D160, and H164.

This sequence belongs to the iron/manganese superoxide dismutase family. In terms of assembly, homotetramer. Mn(2+) is required as a cofactor.

The protein localises to the secreted. It catalyses the reaction 2 superoxide + 2 H(+) = H2O2 + O2. In terms of biological role, destroys superoxide anion radicals which are normally produced within the cells and which are toxic to biological systems. The sequence is that of Superoxide dismutase [Mn] (sodA) from Mycolicibacterium smegmatis (Mycobacterium smegmatis).